The sequence spans 127 residues: Glycine cleavage system H protein (127 aa).

The 83-residue stretch at 22 to 104 (EVVIGITHFA…YEGAWMVKVE (83 aa)) folds into the Lipoyl-binding domain. Lysine 63 carries the N6-lipoyllysine modification.

This sequence belongs to the GcvH family. In terms of assembly, the glycine cleavage system is composed of four proteins: P, T, L and H. (R)-lipoate is required as a cofactor.

Its function is as follows. The glycine cleavage system catalyzes the degradation of glycine. The H protein shuttles the methylamine group of glycine from the P protein to the T protein. In terms of biological role, is also involved in protein lipoylation via its role as an octanoyl/lipoyl carrier protein intermediate. The polypeptide is Glycine cleavage system H protein (Bacillus cereus (strain B4264)).